A 375-amino-acid chain; its full sequence is Alanine racemase (375 aa).

Residue Lys-41 is the Proton acceptor; specific for D-alanine of the active site. The residue at position 41 (Lys-41) is an N6-(pyridoxal phosphate)lysine. Position 141 (Arg-141) interacts with substrate. The active-site Proton acceptor; specific for L-alanine is Tyr-270. Met-317 contributes to the substrate binding site.

It belongs to the alanine racemase family. Requires pyridoxal 5'-phosphate as cofactor.

It carries out the reaction L-alanine = D-alanine. The protein operates within amino-acid biosynthesis; D-alanine biosynthesis; D-alanine from L-alanine: step 1/1. Its function is as follows. Catalyzes the interconversion of L-alanine and D-alanine. May also act on other amino acids. In Lactiplantibacillus plantarum (strain ATCC BAA-793 / NCIMB 8826 / WCFS1) (Lactobacillus plantarum), this protein is Alanine racemase (alr).